The sequence spans 96 residues: uncharacterized protein (96 aa).

Transmembrane regions (helical) follow at residues 27–47 (LAFR…ALLI) and 50–70 (LSGV…SIVF).

Its subcellular location is the cell membrane. This is an uncharacterized protein from Haemophilus influenzae (strain ATCC 51907 / DSM 11121 / KW20 / Rd).